Reading from the N-terminus, the 160-residue chain is Putative antiporter subunit mnhE2 (160 aa).

3 helical membrane-spanning segments follow: residues histidine 22–leucine 42, isoleucine 55–serine 75, and serine 100–isoleucine 120.

This sequence belongs to the CPA3 antiporters (TC 2.A.63) subunit E family. As to quaternary structure, may form a heterooligomeric complex that consists of seven subunits: mnhA2, mnhB2, mnhC2, mnhD2, mnhE2, mnhF2 and mnhG2.

It is found in the cell membrane. The polypeptide is Putative antiporter subunit mnhE2 (mnhE2) (Staphylococcus aureus (strain Mu3 / ATCC 700698)).